A 238-amino-acid chain; its full sequence is Sugar fermentation stimulation protein homolog (238 aa).

This sequence belongs to the SfsA family.

The polypeptide is Sugar fermentation stimulation protein homolog (Alkalilimnicola ehrlichii (strain ATCC BAA-1101 / DSM 17681 / MLHE-1)).